The following is a 178-amino-acid chain: Photosystem II extrinsic protein V (178 aa).

An N-terminal signal peptide occupies residues 1-38 (MFSKFFSLQKAFAAARRRLLILILVLGMAGYAWGPALA). Residues C71, C74, H75, and H126 each coordinate heme c.

The protein belongs to the cytochrome c family. PsbV subfamily. In terms of assembly, PSII is composed of 1 copy each of membrane proteins PsbA, PsbB, PsbC, PsbD, PsbE, PsbF, PsbH, PsbI, PsbJ, PsbK, PsbL, PsbM, PsbT, PsbX, PsbY, PsbZ, Psb30/Ycf12, peripheral proteins PsbO, CyanoQ (PsbQ), PsbU, PsbV and a large number of cofactors. It forms dimeric complexes. It depends on heme c as a cofactor.

It localises to the cellular thylakoid membrane. Its function is as follows. One of the extrinsic, lumenal subunits of photosystem II (PSII). PSII is a light-driven water plastoquinone oxidoreductase, using light energy to abstract electrons from H(2)O, generating a proton gradient subsequently used for ATP formation. The extrinsic proteins stabilize the structure of photosystem II oxygen-evolving complex (OEC), the ion environment of oxygen evolution and protect the OEC against heat-induced inactivation. Low-potential cytochrome c that plays a role in the OEC of PSII. In Synechococcus sp. (strain JA-3-3Ab) (Cyanobacteria bacterium Yellowstone A-Prime), this protein is Photosystem II extrinsic protein V.